The sequence spans 113 residues: MGTTMLAEPRTLTKAELAELLFERVGLNKREAKDIVDTFFEEIRDALARGDSVKLSGFGNFQVRDKPPRPGRNPKTGETIPIAARRVVTFHASQKLKSVVEQPNSPPDPASAE.

2 disordered regions span residues 59–80 (GNFQVRDKPPRPGRNPKTGETI) and 94–113 (QKLKSVVEQPNSPPDPASAE). Residues 104-113 (NSPPDPASAE) are compositionally biased toward pro residues.

Belongs to the bacterial histone-like protein family. As to quaternary structure, heterodimer of an alpha and a beta chain.

This protein is one of the two subunits of integration host factor, a specific DNA-binding protein that functions in genetic recombination as well as in transcriptional and translational control. This is Integration host factor subunit alpha from Bordetella pertussis (strain Tohama I / ATCC BAA-589 / NCTC 13251).